Consider the following 215-residue polypeptide: Ras-related protein Rab-5B (215 aa).

GTP is bound by residues Ser29, Ala30, Gly32, Lys33, Ser34, Ser35, His46, Glu47, Thr52, Gly78, Asn133, Lys134, Asp136, Ala164, and Lys165. Ser34 contacts Mg(2+). 2 consecutive short sequence motifs (switch) follow at residues 44–56 (QFHE…IGAA) and 77–93 (AGQE…YRGA). Thr52 contributes to the Mg(2+) binding site. Residues 184-215 (SEPQSTSGAAGRSRGVDLHEQTQQNKSQCCSN) form a disordered region. Positions 204 to 215 (QTQQNKSQCCSN) are enriched in polar residues. 2 S-geranylgeranyl cysteine lipidation sites follow: Cys212 and Cys213.

Belongs to the small GTPase superfamily. Rab family. Mg(2+) is required as a cofactor.

Its subcellular location is the cell membrane. The protein localises to the early endosome membrane. It carries out the reaction GTP + H2O = GDP + phosphate + H(+). With respect to regulation, regulated by guanine nucleotide exchange factors (GEFs) which promote the exchange of bound GDP for free GTP. Regulated by GTPase activating proteins (GAPs) which increase the GTP hydrolysis activity. Inhibited by GDP dissociation inhibitors (GDIs). In terms of biological role, the small GTPases Rab are key regulators of intracellular membrane trafficking, from the formation of transport vesicles to their fusion with membranes. Rabs cycle between an inactive GDP-bound form and an active GTP-bound form that is able to recruit to membranes different sets of downstream effectors directly responsible for vesicle formation, movement, tethering and fusion. This Gallus gallus (Chicken) protein is Ras-related protein Rab-5B (RAB5B).